The primary structure comprises 72 residues: Translation initiation factor IF-1 (72 aa).

An S1-like domain is found at 1-72 (MIKEDNIEMH…SKGRIIFRSR (72 aa)).

Belongs to the IF-1 family. In terms of assembly, component of the 30S ribosomal translation pre-initiation complex which assembles on the 30S ribosome in the order IF-2 and IF-3, IF-1 and N-formylmethionyl-tRNA(fMet); mRNA recruitment can occur at any time during PIC assembly.

Its subcellular location is the cytoplasm. One of the essential components for the initiation of protein synthesis. Stabilizes the binding of IF-2 and IF-3 on the 30S subunit to which N-formylmethionyl-tRNA(fMet) subsequently binds. Helps modulate mRNA selection, yielding the 30S pre-initiation complex (PIC). Upon addition of the 50S ribosomal subunit IF-1, IF-2 and IF-3 are released leaving the mature 70S translation initiation complex. This chain is Translation initiation factor IF-1, found in Blochmanniella floridana.